The primary structure comprises 231 residues: uncharacterized protein (231 aa).

10 to 34 lines the NADP(+) pocket; that stretch reads IITGASSGIGAATAKALEKQGVKVV. Ser140 serves as a coordination point for substrate. Tyr153 functions as the Proton acceptor in the catalytic mechanism.

This sequence belongs to the short-chain dehydrogenases/reductases (SDR) family.

This is an uncharacterized protein from Staphylococcus haemolyticus (strain JCSC1435).